A 402-amino-acid polypeptide reads, in one-letter code: AA9 family lytic polysaccharide monooxygenase E (402 aa).

The N-terminal stretch at 1 to 16 is a signal peptide; that stretch reads MSRLVSFASLLAAVNA. His-17 contributes to the Cu(2+) binding site. 2 disulfide bridges follow: Cys-72–Cys-194 and Cys-113–Cys-117. Asn-75 carries N-linked (GlcNAc...) asparagine glycosylation. His-102 provides a ligand contact to Cu(2+). The N-linked (GlcNAc...) asparagine glycan is linked to Asn-154. The O2 site is built by His-180 and Gln-189. Tyr-191 serves as a coordination point for Cu(2+). The CBM1 domain maps to 364-400; the sequence is GSNPLYAQCGGLNFKGASGCVAGATCKKMNPYYSQCV.

Belongs to the polysaccharide monooxygenase AA9 family. It depends on Cu(2+) as a cofactor.

It localises to the secreted. The catalysed reaction is [(1-&gt;4)-beta-D-glucosyl]n+m + reduced acceptor + O2 = 4-dehydro-beta-D-glucosyl-[(1-&gt;4)-beta-D-glucosyl]n-1 + [(1-&gt;4)-beta-D-glucosyl]m + acceptor + H2O.. Functionally, lytic polysaccharide monooxygenase (LPMO) that depolymerizes crystalline and amorphous polysaccharides via the oxidation of scissile alpha- or beta-(1-4)-glycosidic bonds, yielding C1 or C4 oxidation products. Catalysis by LPMOs requires the reduction of the active-site copper from Cu(II) to Cu(I) by a reducing agent and H(2)O(2) or O(2) as a cosubstrate. The protein is AA9 family lytic polysaccharide monooxygenase E of Emericella nidulans (strain FGSC A4 / ATCC 38163 / CBS 112.46 / NRRL 194 / M139) (Aspergillus nidulans).